Consider the following 82-residue polypeptide: Exodeoxyribonuclease 7 small subunit (82 aa).

It belongs to the XseB family. Heterooligomer composed of large and small subunits.

Its subcellular location is the cytoplasm. The catalysed reaction is Exonucleolytic cleavage in either 5'- to 3'- or 3'- to 5'-direction to yield nucleoside 5'-phosphates.. Bidirectionally degrades single-stranded DNA into large acid-insoluble oligonucleotides, which are then degraded further into small acid-soluble oligonucleotides. This Coxiella burnetii (strain CbuG_Q212) (Coxiella burnetii (strain Q212)) protein is Exodeoxyribonuclease 7 small subunit.